We begin with the raw amino-acid sequence, 177 residues long: Large ribosomal subunit protein uL6 (177 aa).

The protein belongs to the universal ribosomal protein uL6 family. As to quaternary structure, part of the 50S ribosomal subunit.

This protein binds to the 23S rRNA, and is important in its secondary structure. It is located near the subunit interface in the base of the L7/L12 stalk, and near the tRNA binding site of the peptidyltransferase center. In Polaromonas naphthalenivorans (strain CJ2), this protein is Large ribosomal subunit protein uL6.